The following is a 411-amino-acid chain: Bifunctional protein GlmU (411 aa).

The segment at 1–204 (MDAIILCAGK…NGKLHGIELN (204 aa)) is pyrophosphorylase. UTP-binding positions include 6–9 (LCAG), glutamine 74, and glycine 79. N-acetyl-alpha-D-glucosamine 1-phosphate contacts are provided by threonine 80, glycine 130, asparagine 142, and asparagine 158. Residues 205 to 224 (GYWNDIGHPWDVLSANNRFL) form a linker region. The segment at 225 to 411 (NKIISKVSGK…DELVITKKRN (187 aa)) is N-acetyltransferase. Histidine 308 (proton acceptor) is an active-site residue. The acetyl-CoA site is built by alanine 384 and lysine 401.

The protein in the N-terminal section; belongs to the N-acetylglucosamine-1-phosphate uridyltransferase family. This sequence in the C-terminal section; belongs to the transferase hexapeptide repeat family.

It catalyses the reaction N-acetyl-alpha-D-glucosamine 1-phosphate + UTP + H(+) = UDP-N-acetyl-alpha-D-glucosamine + diphosphate. The enzyme catalyses alpha-D-glucosamine 1-phosphate + acetyl-CoA = N-acetyl-alpha-D-glucosamine 1-phosphate + CoA + H(+). Its pathway is nucleotide-sugar biosynthesis; UDP-N-acetyl-alpha-D-glucosamine biosynthesis; N-acetyl-alpha-D-glucosamine 1-phosphate from alpha-D-glucosamine 6-phosphate (route II): step 2/2. It functions in the pathway nucleotide-sugar biosynthesis; UDP-N-acetyl-alpha-D-glucosamine biosynthesis; UDP-N-acetyl-alpha-D-glucosamine from N-acetyl-alpha-D-glucosamine 1-phosphate: step 1/1. Its function is as follows. Catalyzes the last two sequential reactions in the de novo biosynthetic pathway for UDP-N-acetyl-glucosamine (UDP-GlcNAc). Responsible for the acetylation of GlcN-1-P to GlcNAc-1-P, and for the uridyl transfer from UTP to GlcNAc-1-P, to produce UDP-GlcNAc and pyrophosphate. This Methanococcus maripaludis (strain C7 / ATCC BAA-1331) protein is Bifunctional protein GlmU.